Reading from the N-terminus, the 318-residue chain is ZAR1-like protein (318 aa).

Positions 149–211 are disordered; it reads LSDPPEAGQP…PVDSSQPLGR (63 aa). Residues 155 to 169 show a composition bias toward pro residues; the sequence is AGQPPPPLPPPSPPP. The 3CxxC-type zinc-finger motif lies at 219–304; sequence PKYGYFHCKD…QELCGRCKDK (86 aa).

It belongs to the ZAR1 family. As to quaternary structure, interacts with YBX2.

The protein resides in the cytoplasm. The protein localises to the cytoplasmic ribonucleoprotein granule. In terms of biological role, mRNA-binding protein required for maternal mRNA storage, translation and degradation during oocyte maturation. Probably promotes formation of some phase-separated membraneless compartment that stores maternal mRNAs in oocytes: acts by undergoing liquid-liquid phase separation upon binding to maternal mRNAs. Binds to the 3'-UTR of maternal mRNAs, inhibiting their translation. This chain is ZAR1-like protein (ZAR1L), found in Bos taurus (Bovine).